The sequence spans 352 residues: Protein RecA (352 aa).

68 to 75 (GPESSGKT) contacts ATP.

Belongs to the RecA family.

The protein localises to the cytoplasm. Its function is as follows. Can catalyze the hydrolysis of ATP in the presence of single-stranded DNA, the ATP-dependent uptake of single-stranded DNA by duplex DNA, and the ATP-dependent hybridization of homologous single-stranded DNAs. It interacts with LexA causing its activation and leading to its autocatalytic cleavage. The polypeptide is Protein RecA (Clostridium perfringens (strain SM101 / Type A)).